The following is a 313-amino-acid chain: Pyrimidine-specific ribonucleoside hydrolase RihA (313 aa).

His-240 is an active-site residue.

The protein belongs to the IUNH family. RihA subfamily.

Its function is as follows. Hydrolyzes cytidine or uridine to ribose and cytosine or uracil, respectively. This Enterobacter sp. (strain 638) protein is Pyrimidine-specific ribonucleoside hydrolase RihA.